Reading from the N-terminus, the 283-residue chain is Phosphate import ATP-binding protein PstB (283 aa).

Polar residues predominate over residues 1–20 (MAQTLAQTKQISQSHTFDVS). The interval 1–33 (MAQTLAQTKQISQSHTFDVSQSHHKTPNDTNSH) is disordered. An ABC transporter domain is found at 37-278 (YSTQNLDLWY…PSNKKTEDYI (242 aa)). Residue 69–76 (GPSGCGKS) participates in ATP binding.

It belongs to the ABC transporter superfamily. Phosphate importer (TC 3.A.1.7) family. As to quaternary structure, the complex is composed of two ATP-binding proteins (PstB), two transmembrane proteins (PstC and PstA) and a solute-binding protein (PstS).

It is found in the cell membrane. The enzyme catalyses phosphate(out) + ATP + H2O = ADP + 2 phosphate(in) + H(+). Part of the ABC transporter complex PstSACB involved in phosphate import. Responsible for energy coupling to the transport system. The protein is Phosphate import ATP-binding protein PstB of Staphylococcus aureus (strain bovine RF122 / ET3-1).